A 770-amino-acid chain; its full sequence is Elongation factor G, mitochondrial (770 aa).

Residues 1-24 (MLKLSFRSLTSRLPRLSTLVVRGY) constitute a mitochondrion transit peptide. In terms of domain architecture, tr-type G spans 57 to 353 (KQIRNIGISA…AVCDYLPNPS (297 aa)). GTP is bound by residues 66 to 73 (AHIDSGKT), 151 to 155 (DTPGH), and 205 to 208 (NKMD).

It belongs to the TRAFAC class translation factor GTPase superfamily. Classic translation factor GTPase family. EF-G/EF-2 subfamily.

It is found in the mitochondrion. It participates in protein biosynthesis; polypeptide chain elongation. Functionally, mitochondrial GTPase that catalyzes the GTP-dependent ribosomal translocation step during translation elongation. During this step, the ribosome changes from the pre-translocational (PRE) to the post-translocational (POST) state as the newly formed A-site-bound peptidyl-tRNA and P-site-bound deacylated tRNA move to the P and E sites, respectively. Catalyzes the coordinated movement of the two tRNA molecules, the mRNA and conformational changes in the ribosome. The chain is Elongation factor G, mitochondrial (mef1) from Schizosaccharomyces pombe (strain 972 / ATCC 24843) (Fission yeast).